Here is a 500-residue protein sequence, read N- to C-terminus: Lysine--tRNA ligase (500 aa).

Positions 410 and 417 each coordinate Mg(2+).

The protein belongs to the class-II aminoacyl-tRNA synthetase family. Homodimer. Requires Mg(2+) as cofactor.

It is found in the cytoplasm. The catalysed reaction is tRNA(Lys) + L-lysine + ATP = L-lysyl-tRNA(Lys) + AMP + diphosphate. The polypeptide is Lysine--tRNA ligase (Shewanella baltica (strain OS155 / ATCC BAA-1091)).